Consider the following 82-residue polypeptide: DNA-directed RNA polymerase subunit omega (82 aa).

This sequence belongs to the RNA polymerase subunit omega family. In terms of assembly, the RNAP catalytic core consists of 2 alpha, 1 beta, 1 beta' and 1 omega subunit. When a sigma factor is associated with the core the holoenzyme is formed, which can initiate transcription.

It carries out the reaction RNA(n) + a ribonucleoside 5'-triphosphate = RNA(n+1) + diphosphate. Promotes RNA polymerase assembly. Latches the N- and C-terminal regions of the beta' subunit thereby facilitating its interaction with the beta and alpha subunits. The polypeptide is DNA-directed RNA polymerase subunit omega (Lacticaseibacillus casei (strain BL23) (Lactobacillus casei)).